We begin with the raw amino-acid sequence, 25 residues long: Inorganic pyrophosphatase (25 aa).

As to quaternary structure, monomer. The cofactor is Mg(2+).

The catalysed reaction is diphosphate + H2O = 2 phosphate + H(+). The chain is Inorganic pyrophosphatase from Cyanophora paradoxa.